Consider the following 292-residue polypeptide: Phosphatidylserine decarboxylase proenzyme (292 aa).

Residues aspartate 98, histidine 153, and serine 254 each act as charge relay system; for autoendoproteolytic cleavage activity in the active site. The active-site Schiff-base intermediate with substrate; via pyruvic acid; for decarboxylase activity is serine 254. Serine 254 carries the pyruvic acid (Ser); by autocatalysis modification.

Belongs to the phosphatidylserine decarboxylase family. PSD-B subfamily. Prokaryotic type I sub-subfamily. As to quaternary structure, heterodimer of a large membrane-associated beta subunit and a small pyruvoyl-containing alpha subunit. Pyruvate serves as cofactor. Post-translationally, is synthesized initially as an inactive proenzyme. Formation of the active enzyme involves a self-maturation process in which the active site pyruvoyl group is generated from an internal serine residue via an autocatalytic post-translational modification. Two non-identical subunits are generated from the proenzyme in this reaction, and the pyruvate is formed at the N-terminus of the alpha chain, which is derived from the carboxyl end of the proenzyme. The autoendoproteolytic cleavage occurs by a canonical serine protease mechanism, in which the side chain hydroxyl group of the serine supplies its oxygen atom to form the C-terminus of the beta chain, while the remainder of the serine residue undergoes an oxidative deamination to produce ammonia and the pyruvoyl prosthetic group on the alpha chain. During this reaction, the Ser that is part of the protease active site of the proenzyme becomes the pyruvoyl prosthetic group, which constitutes an essential element of the active site of the mature decarboxylase.

Its subcellular location is the cell membrane. It carries out the reaction a 1,2-diacyl-sn-glycero-3-phospho-L-serine + H(+) = a 1,2-diacyl-sn-glycero-3-phosphoethanolamine + CO2. The protein operates within phospholipid metabolism; phosphatidylethanolamine biosynthesis; phosphatidylethanolamine from CDP-diacylglycerol: step 2/2. Functionally, catalyzes the formation of phosphatidylethanolamine (PtdEtn) from phosphatidylserine (PtdSer). In Halorhodospira halophila (strain DSM 244 / SL1) (Ectothiorhodospira halophila (strain DSM 244 / SL1)), this protein is Phosphatidylserine decarboxylase proenzyme.